The primary structure comprises 603 residues: Glutamyl-tRNA(Gln) amidotransferase subunit E (603 aa).

It belongs to the GatB/GatE family. GatE subfamily. As to quaternary structure, heterodimer of GatD and GatE.

It catalyses the reaction L-glutamyl-tRNA(Gln) + L-glutamine + ATP + H2O = L-glutaminyl-tRNA(Gln) + L-glutamate + ADP + phosphate + H(+). Allows the formation of correctly charged Gln-tRNA(Gln) through the transamidation of misacylated Glu-tRNA(Gln) in organisms which lack glutaminyl-tRNA synthetase. The reaction takes place in the presence of glutamine and ATP through an activated gamma-phospho-Glu-tRNA(Gln). The GatDE system is specific for glutamate and does not act on aspartate. This Thermoplasma acidophilum (strain ATCC 25905 / DSM 1728 / JCM 9062 / NBRC 15155 / AMRC-C165) protein is Glutamyl-tRNA(Gln) amidotransferase subunit E.